The following is a 249-amino-acid chain: Solute carrier family 25 member 35 (249 aa).

2 Solcar repeats span residues 1 to 90 (MDFL…AEAG) and 152 to 243 (QSWK…LRMV). The next 4 helical transmembrane spans lie at 38 to 58 (TYQR…KVDG), 59 to 79 (LAAL…MNGI), 154 to 174 (WKVA…AMTP), and 226 to 249 (LGPH…TYTK).

It belongs to the mitochondrial carrier (TC 2.A.29) family.

It is found in the mitochondrion inner membrane. It catalyses the reaction a dicarboxylate(in) + sulfate(out) = a dicarboxylate(out) + sulfate(in). Functionally, putative antiporter that exchanges dicarboxylates and sulfur oxoanions across the inner membrane of mitochondria. The sequence is that of Solute carrier family 25 member 35 (SLC25A35) from Bos taurus (Bovine).